The chain runs to 25 residues: Neuromedin-U-25 (25 aa).

Asn25 carries the asparagine amide modification.

This sequence belongs to the NmU family.

The protein localises to the secreted. Its function is as follows. Stimulates uterine smooth muscle contraction and causes selective vasoconstriction. The sequence is that of Neuromedin-U-25 (NMU) from Gallus gallus (Chicken).